The primary structure comprises 84 residues: Putative defensin-like protein 63 (84 aa).

Positions 1-21 (MDIRKTYVIIFFVGILTISFS) are cleaved as a signal peptide. Disulfide bonds link C40-C81, C44-C67, C53-C79, and C57-C80.

This sequence belongs to the DEFL family.

Its subcellular location is the secreted. This chain is Putative defensin-like protein 63, found in Arabidopsis thaliana (Mouse-ear cress).